The following is a 356-amino-acid chain: uncharacterized protein (356 aa).

The next 6 membrane-spanning stretches (helical) occupy residues 2 to 22, 35 to 55, 74 to 94, 99 to 119, 124 to 144, and 154 to 174; these read FEAF…FHRL, AYVT…PIPY, FTNM…EIVV, IMYG…GPFL, VLSL…VALV, and IILI…FVDI. A GGDEF domain is found at 218–353; the sequence is QSIALLLIDI…GRNKVMFNPI (136 aa).

Its subcellular location is the cell membrane. This is an uncharacterized protein from Staphylococcus aureus (strain bovine RF122 / ET3-1).